The sequence spans 479 residues: Ribulose bisphosphate carboxylase large chain (479 aa).

Positions 1-2 are excised as a propeptide; sequence MS. Residues N123 and T173 each contribute to the substrate site. Catalysis depends on K175, which acts as the Proton acceptor. A substrate-binding site is contributed by K177. 3 residues coordinate Mg(2+): K201, D203, and E204. Residue K201 is modified to N6-carboxylysine. S208 carries the phosphoserine modification. The active-site Proton acceptor is H294. Positions 295 and 327 each coordinate substrate. T330 is modified (phosphothreonine). S379 provides a ligand contact to substrate.

This sequence belongs to the RuBisCO large chain family. Type I subfamily. Heterohexadecamer of 8 large chains and 8 small chains; disulfide-linked. The disulfide link is formed within the large subunit homodimers. It depends on Mg(2+) as a cofactor. The disulfide bond which can form in the large chain dimeric partners within the hexadecamer appears to be associated with oxidative stress and protein turnover.

Its subcellular location is the plastid. It is found in the chloroplast. The catalysed reaction is 2 (2R)-3-phosphoglycerate + 2 H(+) = D-ribulose 1,5-bisphosphate + CO2 + H2O. It catalyses the reaction D-ribulose 1,5-bisphosphate + O2 = 2-phosphoglycolate + (2R)-3-phosphoglycerate + 2 H(+). Functionally, ruBisCO catalyzes two reactions: the carboxylation of D-ribulose 1,5-bisphosphate, the primary event in carbon dioxide fixation, as well as the oxidative fragmentation of the pentose substrate in the photorespiration process. Both reactions occur simultaneously and in competition at the same active site. This Olimarabidopsis pumila (Dwarf rocket) protein is Ribulose bisphosphate carboxylase large chain.